The sequence spans 289 residues: Shikimate dehydrogenase (NADP(+)) (289 aa).

Shikimate contacts are provided by residues 20–22 (SIS) and Ser67. Lys71 (proton acceptor) is an active-site residue. Asp83 contacts NADP(+). Shikimate contacts are provided by Asn92 and Asp107. NADP(+) contacts are provided by residues 132–136 (GGGGA) and Val230. Position 232 (Tyr232) interacts with shikimate. Residue Gly253 coordinates NADP(+).

Belongs to the shikimate dehydrogenase family. In terms of assembly, homodimer.

It catalyses the reaction shikimate + NADP(+) = 3-dehydroshikimate + NADPH + H(+). It participates in metabolic intermediate biosynthesis; chorismate biosynthesis; chorismate from D-erythrose 4-phosphate and phosphoenolpyruvate: step 4/7. Functionally, involved in the biosynthesis of the chorismate, which leads to the biosynthesis of aromatic amino acids. Catalyzes the reversible NADPH linked reduction of 3-dehydroshikimate (DHSA) to yield shikimate (SA). In Streptococcus suis (strain 98HAH33), this protein is Shikimate dehydrogenase (NADP(+)).